The primary structure comprises 70 residues: Small ribosomal subunit protein bS21B (70 aa).

This sequence belongs to the bacterial ribosomal protein bS21 family.

In Paraburkholderia xenovorans (strain LB400), this protein is Small ribosomal subunit protein bS21B.